The primary structure comprises 124 residues: ATP synthase epsilon chain (124 aa).

The protein belongs to the ATPase epsilon chain family. As to quaternary structure, F-type ATPases have 2 components, CF(1) - the catalytic core - and CF(0) - the membrane proton channel. CF(1) has five subunits: alpha(3), beta(3), gamma(1), delta(1), epsilon(1). CF(0) has three main subunits: a, b and c.

It is found in the cell membrane. Its function is as follows. Produces ATP from ADP in the presence of a proton gradient across the membrane. This chain is ATP synthase epsilon chain, found in Streptomyces avermitilis (strain ATCC 31267 / DSM 46492 / JCM 5070 / NBRC 14893 / NCIMB 12804 / NRRL 8165 / MA-4680).